A 263-amino-acid chain; its full sequence is Small ribosomal subunit protein eS4 (263 aa).

The S4 RNA-binding domain maps to 42–104; the sequence is LPLVIFLRNR…TNELFRLIYD (63 aa).

It belongs to the eukaryotic ribosomal protein eS4 family.

The polypeptide is Small ribosomal subunit protein eS4 (RpS4) (Bombyx mori (Silk moth)).